The chain runs to 807 residues: Ribosomal RNA large subunit methyltransferase K/L (807 aa).

The THUMP domain maps to Gln67–Leu182. Polar residues predominate over residues Asn548–Ser560. The disordered stretch occupies residues Asn548–Arg602. 2 stretches are compositionally biased toward basic and acidic residues: residues Lys561–Asn575 and Gln584–Ala594.

It belongs to the methyltransferase superfamily. RlmKL family.

It localises to the cytoplasm. It carries out the reaction guanosine(2445) in 23S rRNA + S-adenosyl-L-methionine = N(2)-methylguanosine(2445) in 23S rRNA + S-adenosyl-L-homocysteine + H(+). The catalysed reaction is guanosine(2069) in 23S rRNA + S-adenosyl-L-methionine = N(2)-methylguanosine(2069) in 23S rRNA + S-adenosyl-L-homocysteine + H(+). In terms of biological role, specifically methylates the guanine in position 2445 (m2G2445) and the guanine in position 2069 (m7G2069) of 23S rRNA. This is Ribosomal RNA large subunit methyltransferase K/L from Psychrobacter sp. (strain PRwf-1).